The chain runs to 431 residues: Tyrosine--tRNA ligase (431 aa).

Tyr34 is an L-tyrosine binding site. The short motif at 39-48 (PTADSLHIGH) is the 'HIGH' region element. The L-tyrosine site is built by Tyr171 and Gln175. A 'KMSKS' region motif is present at residues 231 to 235 (KFGKT). Lys234 serves as a coordination point for ATP. Residues 353–422 (INVVEALVKT…GKYTILRRGK (70 aa)) form the S4 RNA-binding domain.

Belongs to the class-I aminoacyl-tRNA synthetase family. TyrS type 1 subfamily. Homodimer.

The protein resides in the cytoplasm. It catalyses the reaction tRNA(Tyr) + L-tyrosine + ATP = L-tyrosyl-tRNA(Tyr) + AMP + diphosphate + H(+). Catalyzes the attachment of tyrosine to tRNA(Tyr) in a two-step reaction: tyrosine is first activated by ATP to form Tyr-AMP and then transferred to the acceptor end of tRNA(Tyr). This is Tyrosine--tRNA ligase from Neisseria meningitidis serogroup A / serotype 4A (strain DSM 15465 / Z2491).